A 494-amino-acid chain; its full sequence is Truncated non-functional calcium-binding mitochondrial carrier SAL1-1 (494 aa).

The 36-residue stretch at 11–46 (QRDIRYACLFKELDVKGNGQVTLDNLISAFEKNDHP) folds into the EF-hand 1 domain. Residues Lys-65, Asp-70, Asp-93, Asp-95, Asp-97, Lys-99, and Glu-104 each contribute to the Ca(2+) site. EF-hand domains follow at residues 80 to 115 (NAES…LDNQ), 120 to 155 (NELN…RGQA), and 156 to 191 (SHKK…VPRK). The Ca(2+) site is built by Thr-161 and Ser-166. Solcar repeat units follow at residues 225 to 332 (IRGF…TKKI) and 345 to 434 (LSKF…LKKM). Helical transmembrane passes span 231–248 (FIAG…TAPF), 307–326 (GNGL…FGSF), 355–368 (GLAG…VYPI), 409–428 (RCHS…FGDF), and 458–475 (TSNG…CLSN). The stretch at 452–494 (SKQPGCTSNGCIQWNCRSFCCLSNQSFKNKTTSPRNICTSLCV) is one Solcar 3; truncated repeat.

It belongs to the mitochondrial carrier (TC 2.A.29) family.

It is found in the mitochondrion inner membrane. Its function is as follows. Calcium-dependent mitochondrial solute carrier. The protein is Truncated non-functional calcium-binding mitochondrial carrier SAL1-1 (SAL1) of Saccharomyces cerevisiae (strain ATCC 204508 / S288c) (Baker's yeast).